The sequence spans 306 residues: MWKRWLALALVTIALVHGEEEQRSKSKICANVFCGAGRECAVTEKGEPTCLCIEQCKPHKRPVCGSNGKTYLNHCELHRDACLTGSKIQVDYDGHCKEKKSVSPSASPVVCYQANRDELRRRIIQWLEAEIIPDGWFSKGSNYSEILDKYFKSFDNGDSHLDSSEFLKFVEQNETAVNITAYPNQENNKLLRGLCVDALIELSDENADWKLSFQEFLKCLNPSFNPPEKKCALEDETYADGAETEVDCNRCVCSCGHWVCTAMTCDGKNQKGVQTHTEEEMTRYAQELQKHQGTAEKTKKVNTKEI.

A signal peptide spans 1 to 18; it reads MWKRWLALALVTIALVHG. Residues 28–51 form the Follistatin-like domain; sequence ICANVFCGAGRECAVTEKGEPTCL. Disulfide bonds link C29/C40, C34/C50, C52/C82, C56/C75, and C64/C96. The 53-residue stretch at 46 to 98 folds into the Kazal-like domain; sequence GEPTCLCIEQCKPHKRPVCGSNGKTYLNHCELHRDACLTGSKIQVDYDGHCKE. N142 is a glycosylation site (N-linked (GlcNAc...) asparagine). An EF-hand 1 domain is found at 142–176; it reads NYSEILDKYFKSFDNGDSHLDSSEFLKFVEQNETA. S163 is subject to Phosphoserine. N-linked (GlcNAc...) asparagine glycosylation is found at N173 and N178. In terms of domain architecture, EF-hand 2 spans 191–226; it reads LRGLCVDALIELSDENADWKLSFQEFLKCLNPSFNP. Residues 231 to 285 enclose the VWFC domain; that stretch reads CALEDETYADGAETEVDCNRCVCSCGHWVCTAMTCDGKNQKGVQTHTEEEMTRYA.

As to quaternary structure, homodimer. Interacts with SCN10A. Interacts with DIP2A; DIP2A may act as a cell surface receptor for FSTL1. Interacts with BMP4. Interacts with CD14; this interaction promotes TL4-mediated signaling cascade.

Its subcellular location is the secreted. Secreted glycoprotein that is involved in various physiological processes, such as angiogenesis, regulation of the immune response, cell proliferation and differentiation. Plays a role in the development of the central nervous system, skeletal system, lungs, and ureter. Promotes endothelial cell survival, migration and differentiation into network structures in an AKT-dependent manner. Also promotes survival of cardiac myocytes. Initiates various signaling cascades by activating different receptors on the cell surface such as DIP2A, TLR4 or BMP receptors. The protein is Follistatin-related protein 1 (Fstl1) of Rattus norvegicus (Rat).